A 194-amino-acid chain; its full sequence is MAILSDKTIKEYLEEGKIVIDPLKDEQQIQPSSVDMRLGDEFKVFKVIRKPYIDPKDEEDIAEYMESSTVPEGEAFIIHPNEFALATTQEYVKVPDDLVARVEGRSSMGRLGVTMHVTAGYVDPGFEGRITLEISNIGAMPVALYPGQRVCQLVFETMTTPAELPYGHPKRNSKYMKQLKPESSRVKLDYELKK.

DCTP contacts are provided by residues 105 to 110 (RSSMGR), aspartate 123, 131 to 133 (TLE), glutamine 152, tyrosine 166, lysine 174, and glutamine 178. Glutamate 133 (proton donor/acceptor) is an active-site residue.

The protein belongs to the dCTP deaminase family. As to quaternary structure, homotrimer.

It catalyses the reaction dCTP + 2 H2O = dUMP + NH4(+) + diphosphate. It participates in pyrimidine metabolism; dUMP biosynthesis; dUMP from dCTP: step 1/1. Functionally, bifunctional enzyme that catalyzes both the deamination of dCTP to dUTP and the hydrolysis of dUTP to dUMP without releasing the toxic dUTP intermediate. The sequence is that of dCTP deaminase, dUMP-forming from Methanobrevibacter smithii (strain ATCC 35061 / DSM 861 / OCM 144 / PS).